We begin with the raw amino-acid sequence, 427 residues long: Gamma-glutamyl phosphate reductase (427 aa).

It belongs to the gamma-glutamyl phosphate reductase family.

The protein resides in the cytoplasm. The catalysed reaction is L-glutamate 5-semialdehyde + phosphate + NADP(+) = L-glutamyl 5-phosphate + NADPH + H(+). It functions in the pathway amino-acid biosynthesis; L-proline biosynthesis; L-glutamate 5-semialdehyde from L-glutamate: step 2/2. Its function is as follows. Catalyzes the NADPH-dependent reduction of L-glutamate 5-phosphate into L-glutamate 5-semialdehyde and phosphate. The product spontaneously undergoes cyclization to form 1-pyrroline-5-carboxylate. In Brucella melitensis biotype 2 (strain ATCC 23457), this protein is Gamma-glutamyl phosphate reductase.